The chain runs to 219 residues: Large ribosomal subunit protein uL3 (219 aa).

Residues 133–153 are disordered; sequence GRASHGNSRSHNVPGSIGMAQ. Residue Gln153 is modified to N5-methylglutamine.

It belongs to the universal ribosomal protein uL3 family. Part of the 50S ribosomal subunit. Forms a cluster with proteins L14 and L19. In terms of processing, methylated by PrmB.

One of the primary rRNA binding proteins, it binds directly near the 3'-end of the 23S rRNA, where it nucleates assembly of the 50S subunit. This chain is Large ribosomal subunit protein uL3, found in Burkholderia mallei (strain NCTC 10247).